The primary structure comprises 274 residues: Formamidopyrimidine-DNA glycosylase (274 aa).

Pro2 functions as the Schiff-base intermediate with DNA in the catalytic mechanism. The active-site Proton donor is the Glu3. Lys58 acts as the Proton donor; for beta-elimination activity in catalysis. DNA-binding residues include His91, Arg110, and Lys152. An FPG-type zinc finger spans residues 237-271 (KVYGRKNLPCLVCENKIETVVIAGRHSAFCPHCQP). Arg261 functions as the Proton donor; for delta-elimination activity in the catalytic mechanism.

It belongs to the FPG family. Monomer. The cofactor is Zn(2+).

It carries out the reaction Hydrolysis of DNA containing ring-opened 7-methylguanine residues, releasing 2,6-diamino-4-hydroxy-5-(N-methyl)formamidopyrimidine.. It catalyses the reaction 2'-deoxyribonucleotide-(2'-deoxyribose 5'-phosphate)-2'-deoxyribonucleotide-DNA = a 3'-end 2'-deoxyribonucleotide-(2,3-dehydro-2,3-deoxyribose 5'-phosphate)-DNA + a 5'-end 5'-phospho-2'-deoxyribonucleoside-DNA + H(+). Functionally, involved in base excision repair of DNA damaged by oxidation or by mutagenic agents. Acts as a DNA glycosylase that recognizes and removes damaged bases. Has a preference for oxidized purines, such as 7,8-dihydro-8-oxoguanine (8-oxoG). Has AP (apurinic/apyrimidinic) lyase activity and introduces nicks in the DNA strand. Cleaves the DNA backbone by beta-delta elimination to generate a single-strand break at the site of the removed base with both 3'- and 5'-phosphates. The chain is Formamidopyrimidine-DNA glycosylase from Legionella pneumophila (strain Paris).